The following is a 176-amino-acid chain: NAD(P)H-quinone oxidoreductase subunit 6, chloroplastic (176 aa).

5 consecutive transmembrane segments (helical) span residues 10–30 (FLLVFLGSGLILGGLGVVLLP), 32–52 (PIYSAFSLGLVLICTSLFYIL), 61–81 (AQLLIYVGAINVLIIFAVMFM), 92–112 (LWTVGDGITSMVCISLFISLI), and 152–172 (FFLPFELISIILLVALIGAIA).

The protein belongs to the complex I subunit 6 family. In terms of assembly, NDH is composed of at least 16 different subunits, 5 of which are encoded in the nucleus.

It is found in the plastid. The protein localises to the chloroplast thylakoid membrane. The enzyme catalyses a plastoquinone + NADH + (n+1) H(+)(in) = a plastoquinol + NAD(+) + n H(+)(out). It carries out the reaction a plastoquinone + NADPH + (n+1) H(+)(in) = a plastoquinol + NADP(+) + n H(+)(out). Its function is as follows. NDH shuttles electrons from NAD(P)H:plastoquinone, via FMN and iron-sulfur (Fe-S) centers, to quinones in the photosynthetic chain and possibly in a chloroplast respiratory chain. The immediate electron acceptor for the enzyme in this species is believed to be plastoquinone. Couples the redox reaction to proton translocation, and thus conserves the redox energy in a proton gradient. This is NAD(P)H-quinone oxidoreductase subunit 6, chloroplastic (ndhG) from Solanum tuberosum (Potato).